The primary structure comprises 101 residues: Small ribosomal subunit protein uS17 (101 aa).

This sequence belongs to the universal ribosomal protein uS17 family. Part of the 30S ribosomal subunit.

Its function is as follows. One of the primary rRNA binding proteins, it binds specifically to the 5'-end of 16S ribosomal RNA. The chain is Small ribosomal subunit protein uS17 from Kosmotoga olearia (strain ATCC BAA-1733 / DSM 21960 / TBF 19.5.1).